A 656-amino-acid polypeptide reads, in one-letter code: Fidgetin-like protein 1 (656 aa).

Residues 293–302 (KYSNQPQRNP) show a composition bias toward polar residues. Residues 293–354 (KYSNQPQRNP…QGNSEMNAPS (62 aa)) form a disordered region. Positions 331-340 (RQEDVQDSNR) are enriched in basic and acidic residues. ATP is bound by residues A386 and 426 to 431 (GTGKTL).

The protein belongs to the AAA ATPase family. As to quaternary structure, hexamer. Mg(2+) is required as a cofactor.

The protein localises to the nucleus. It is found in the cytoplasm. The protein resides in the perinuclear region. It catalyses the reaction ATP + H2O = ADP + phosphate + H(+). May be involved in DNA double-strand break (DBS) repair via homologous recombination (HR). May regulate osteoblast proliferation and differentiation. This is Fidgetin-like protein 1 (fignl1) from Xenopus tropicalis (Western clawed frog).